We begin with the raw amino-acid sequence, 621 residues long: Acetolactate synthase (621 aa).

The span at 1–19 (MSAPTRRPAPDAPGAAGIA) shows a compositional bias: low complexity. A disordered region spans residues 1–39 (MSAPTRRPAPDAPGAAGIAPAPPAPAAKPAAGKPKRIGP). Glu89 serves as a coordination point for thiamine diphosphate. Residues Arg190, 296–317 (HGTV…LGTR), and 339–358 (DIDP…IVGD) contribute to the FAD site. The segment at 432-512 (HDQMWAAQFI…IKVALINNGN (81 aa)) is thiamine pyrophosphate binding. Mg(2+) is bound by residues Asp483 and Asn510.

It belongs to the TPP enzyme family. Mg(2+) is required as a cofactor. The cofactor is thiamine diphosphate.

The enzyme catalyses 2 pyruvate + H(+) = (2S)-2-acetolactate + CO2. The protein operates within amino-acid biosynthesis; L-isoleucine biosynthesis; L-isoleucine from 2-oxobutanoate: step 1/4. Its pathway is amino-acid biosynthesis; L-valine biosynthesis; L-valine from pyruvate: step 1/4. This Mycobacterium avium protein is Acetolactate synthase (ilvB).